A 179-amino-acid polypeptide reads, in one-letter code: Protein GrpE (179 aa).

The tract at residues methionine 1–glutamine 45 is disordered. Basic and acidic residues predominate over residues glutamate 33–glutamine 45.

The protein belongs to the GrpE family. As to quaternary structure, homodimer.

Its subcellular location is the cytoplasm. In terms of biological role, participates actively in the response to hyperosmotic and heat shock by preventing the aggregation of stress-denatured proteins, in association with DnaK and GrpE. It is the nucleotide exchange factor for DnaK and may function as a thermosensor. Unfolded proteins bind initially to DnaJ; upon interaction with the DnaJ-bound protein, DnaK hydrolyzes its bound ATP, resulting in the formation of a stable complex. GrpE releases ADP from DnaK; ATP binding to DnaK triggers the release of the substrate protein, thus completing the reaction cycle. Several rounds of ATP-dependent interactions between DnaJ, DnaK and GrpE are required for fully efficient folding. This Brevibacillus choshinensis protein is Protein GrpE.